A 180-amino-acid chain; its full sequence is Large ribosomal subunit protein bL19 (180 aa).

The protein belongs to the bacterial ribosomal protein bL19 family.

Functionally, this protein is located at the 30S-50S ribosomal subunit interface and may play a role in the structure and function of the aminoacyl-tRNA binding site. This chain is Large ribosomal subunit protein bL19, found in Allorhizobium ampelinum (strain ATCC BAA-846 / DSM 112012 / S4) (Agrobacterium vitis (strain S4)).